An 876-amino-acid chain; its full sequence is Leucine--tRNA ligase (876 aa).

The 'HIGH' region signature appears at 42–52; it reads PYPSGKLHMGH. The 'KMSKS' region signature appears at 634–638; the sequence is KMSKS. ATP is bound at residue Lys637.

This sequence belongs to the class-I aminoacyl-tRNA synthetase family.

The protein resides in the cytoplasm. It carries out the reaction tRNA(Leu) + L-leucine + ATP = L-leucyl-tRNA(Leu) + AMP + diphosphate. This Neisseria meningitidis serogroup C / serotype 2a (strain ATCC 700532 / DSM 15464 / FAM18) protein is Leucine--tRNA ligase.